The chain runs to 370 residues: Actin-related protein 2/3 complex subunit 1A (370 aa).

WD repeat units follow at residues 6 to 45 (FLLE…WTKA), 50 to 89 (EHNG…WKPT), 140 to 179 (PIRS…VDEK), 202 to 241 (GTGG…QVST), 244 to 284 (TEFL…TFVS), and 322 to 365 (LHQN…SSIQ).

Belongs to the WD repeat ARPC1 family. As to quaternary structure, probable component of the Arp2/3 complex in which it may replace ARPC1B.

The protein resides in the cytoplasm. The protein localises to the cytoskeleton. It localises to the nucleus. In terms of biological role, probably functions as a component of the Arp2/3 complex which is involved in regulation of actin polymerization and together with an activating nucleation-promoting factor (NPF) mediates the formation of branched actin networks. In addition to its role in the cytoplasmic cytoskeleton, the Arp2/3 complex also promotes actin polymerization in the nucleus, thereby regulating gene transcription and repair of damaged DNA. The chain is Actin-related protein 2/3 complex subunit 1A (Arpc1a) from Mus musculus (Mouse).